Here is a 622-residue protein sequence, read N- to C-terminus: Probable potassium transport system protein Kup (622 aa).

Helical transmembrane passes span 8-28, 50-70, 101-121, 137-157, 165-185, 213-233, 247-267, 285-305, 337-357, 366-386, 393-413, and 419-439; these read LAVL…TSVL, ILSI…VSLV, VLLL…VITP, PTFT…LFAM, IGKF…LLGV, ITFI…ALYA, WFSV…ALLL, ALIP…QALI, IYMP…VVMF, AYGI…FYVI, PLAL…AFFA, and LFAG…LMIT.

Belongs to the HAK/KUP transporter (TC 2.A.72) family.

It localises to the cell inner membrane. It catalyses the reaction K(+)(in) + H(+)(in) = K(+)(out) + H(+)(out). In terms of biological role, transport of potassium into the cell. Likely operates as a K(+):H(+) symporter. This is Probable potassium transport system protein Kup from Polaromonas naphthalenivorans (strain CJ2).